We begin with the raw amino-acid sequence, 194 residues long: Crossover junction endodeoxyribonuclease RuvC (194 aa).

Active-site residues include aspartate 7, glutamate 68, and aspartate 141. Mg(2+) contacts are provided by aspartate 7, glutamate 68, and aspartate 141. Residues 162–194 (GGEREQHLTAAQRQWAEAAQNSTRRRKNSDRGM) form a disordered region. Positions 184 to 194 (TRRRKNSDRGM) are enriched in basic residues.

This sequence belongs to the RuvC family. In terms of assembly, homodimer which binds Holliday junction (HJ) DNA. The HJ becomes 2-fold symmetrical on binding to RuvC with unstacked arms; it has a different conformation from HJ DNA in complex with RuvA. In the full resolvosome a probable DNA-RuvA(4)-RuvB(12)-RuvC(2) complex forms which resolves the HJ. Mg(2+) is required as a cofactor.

It localises to the cytoplasm. The enzyme catalyses Endonucleolytic cleavage at a junction such as a reciprocal single-stranded crossover between two homologous DNA duplexes (Holliday junction).. The RuvA-RuvB-RuvC complex processes Holliday junction (HJ) DNA during genetic recombination and DNA repair. Endonuclease that resolves HJ intermediates. Cleaves cruciform DNA by making single-stranded nicks across the HJ at symmetrical positions within the homologous arms, yielding a 5'-phosphate and a 3'-hydroxyl group; requires a central core of homology in the junction. The consensus cleavage sequence is 5'-(A/T)TT(C/G)-3'. Cleavage occurs on the 3'-side of the TT dinucleotide at the point of strand exchange. HJ branch migration catalyzed by RuvA-RuvB allows RuvC to scan DNA until it finds its consensus sequence, where it cleaves and resolves the cruciform DNA. The sequence is that of Crossover junction endodeoxyribonuclease RuvC from Bifidobacterium longum subsp. infantis (strain ATCC 15697 / DSM 20088 / JCM 1222 / NCTC 11817 / S12).